The primary structure comprises 983 residues: Probable beta-galactosidase C (983 aa).

A signal peptide spans 1 to 23 (MRIFSFLFLLLLGILTGQGLVSG). The substrate site is built by Tyr82, Asn127, Ala128, Glu129, and Asn187. The active-site Proton donor is Glu188. Asn197 is a glycosylation site (N-linked (GlcNAc...) asparagine). Tyr251 contacts substrate. Cys257 and Cys304 are disulfide-bonded. Residue Asn276 is glycosylated (N-linked (GlcNAc...) asparagine). The active-site Nucleophile is Glu287. Tyr353 contributes to the substrate binding site. Residues Asn391, Asn434, Asn466, Asn516, Asn601, Asn676, Asn714, Asn719, Asn758, and Asn804 are each glycosylated (N-linked (GlcNAc...) asparagine).

The protein belongs to the glycosyl hydrolase 35 family.

The protein resides in the secreted. The catalysed reaction is Hydrolysis of terminal non-reducing beta-D-galactose residues in beta-D-galactosides.. Its function is as follows. Cleaves beta-linked terminal galactosyl residues from gangliosides, glycoproteins, and glycosaminoglycans. This is Probable beta-galactosidase C (lacC) from Aspergillus fumigatus (strain CBS 144.89 / FGSC A1163 / CEA10) (Neosartorya fumigata).